We begin with the raw amino-acid sequence, 863 residues long: Transforming growth factor-beta receptor-associated protein 1 homolog (863 aa).

In terms of domain architecture, CNH spans 23-297 (RINIECIECC…QLLQDFEGKV (275 aa)). The CHCR repeat unit spans residues 564–729 (RPTSEERRGQ…LLSVYLDPDV (166 aa)).

This sequence belongs to the TRAP1 family. Component of the putative class C core vacuole/endosome tethering (CORVET) complex.

It localises to the cytoplasm. Its subcellular location is the early endosome. Plays a role in the TGF-beta signaling pathway. Functionally, plays a role in vesicle-mediated protein trafficking of the endocytic membrane transport pathway. Believed to act as a component of the putative CORVET endosomal tethering complexes which is proposed to be involved in the Rab5-to-Rab7 endosome conversion probably implicating MON1A/B, and via binding SNAREs and SNARE complexes to mediate tethering and docking events during SNARE-mediated membrane fusion. The CORVET complex is proposed to function as a Rab5 effector to mediate early endosome fusion probably in specific endosome subpopulations. This is Transforming growth factor-beta receptor-associated protein 1 homolog (tgfbrap1) from Danio rerio (Zebrafish).